The following is a 776-amino-acid chain: Mitochondrial intermediate peptidase (776 aa).

A mitochondrion-targeting transit peptide spans 1–28; the sequence is MFVRFYKRLDRQYIQSQRRWILSSNKCL. The interval 48–71 is disordered; it reads DHWEESQAQNTSSEQDNKGKNSSY. Polar residues predominate over residues 53–71; the sequence is SQAQNTSSEQDNKGKNSSY. His-567 serves as a coordination point for Zn(2+). The active site involves Glu-568. Residues His-571 and His-574 each contribute to the Zn(2+) site.

This sequence belongs to the peptidase M3 family. It depends on Zn(2+) as a cofactor.

The protein resides in the mitochondrion matrix. It catalyses the reaction Release of an N-terminal octapeptide as second stage of processing of some proteins imported into the mitochondrion.. Its function is as follows. Cleaves proteins, imported into the mitochondrion, to their mature size. While most mitochondrial precursor proteins are processed to the mature form in one step by mitochondrial processing peptidase (MPP), the sequential cleavage by MIP of an octapeptide after initial processing by MPP is a required step for a subgroup of nuclear-encoded precursor proteins destined for the matrix or the inner membrane. The chain is Mitochondrial intermediate peptidase (OCT1) from Eremothecium gossypii (strain ATCC 10895 / CBS 109.51 / FGSC 9923 / NRRL Y-1056) (Yeast).